The sequence spans 772 residues: Semaphorin-3A (772 aa).

An N-terminal signal peptide occupies residues 1 to 20 (MGWFTGIACLFWGVLLTARA). The Sema domain occupies 31-514 (RLKLSYKEML…STAGVAQLPL (484 aa)). Asparagine 53 is a glycosylation site (N-linked (GlcNAc...) asparagine). An intrachain disulfide couples cysteine 103 to cysteine 114. Asparagine 125 is a glycosylation site (N-linked (GlcNAc...) asparagine). 4 disulfides stabilise this stretch: cysteine 132–cysteine 141, cysteine 269–cysteine 381, cysteine 293–cysteine 341, and cysteine 517–cysteine 535. The 87-residue stretch at 579–665 (PSLEERIIYG…GFMQTLLKVT (87 aa)) folds into the Ig-like C2-type domain. N-linked (GlcNAc...) asparagine glycosylation is present at asparagine 591. A disulfide bond links cysteine 650 and cysteine 723. Basic residues predominate over residues 729 to 738 (RDRKQRRQRP). Residues 729 to 772 (RDRKQRRQRPGHSQGSSNKWKHMQESKKGRNRRTHEFERAPRSV) are disordered. Over residues 750–772 (HMQESKKGRNRRTHEFERAPRSV) the composition is skewed to basic and acidic residues.

Belongs to the semaphorin family. As to quaternary structure, interacts with PXND1.

Its subcellular location is the secreted. Its function is as follows. Plays a role in growth cones guidance. May function to pattern sensory projections by selectively repelling axons that normally terminate dorsally. Involved in the development of the olfactory system and in neuronal control of puberty. The polypeptide is Semaphorin-3A (Sema3a) (Mus musculus (Mouse)).